The sequence spans 602 residues: Aspartate--tRNA(Asp/Asn) ligase (602 aa).

Glutamate 170 is a binding site for L-aspartate. The tract at residues 194 to 197 (QLFK) is aspartate. Arginine 216 provides a ligand contact to L-aspartate. Residues 216 to 218 (RDE) and glutamine 225 each bind ATP. Histidine 448 is a binding site for L-aspartate. Residue glutamate 482 participates in ATP binding. Arginine 489 contributes to the L-aspartate binding site. Residue 534-537 (GWDR) coordinates ATP. Residues 559-602 (GGVDPLTNAPAPITAQQRKESGVDAKPEPKGDAASAKPDAPADK) are disordered. A compositionally biased stretch (basic and acidic residues) spans 575-589 (QRKESGVDAKPEPKG). Positions 590–602 (DAASAKPDAPADK) are enriched in low complexity.

Belongs to the class-II aminoacyl-tRNA synthetase family. Type 1 subfamily. Homodimer.

The protein resides in the cytoplasm. It carries out the reaction tRNA(Asx) + L-aspartate + ATP = L-aspartyl-tRNA(Asx) + AMP + diphosphate. In terms of biological role, aspartyl-tRNA synthetase with relaxed tRNA specificity since it is able to aspartylate not only its cognate tRNA(Asp) but also tRNA(Asn). Reaction proceeds in two steps: L-aspartate is first activated by ATP to form Asp-AMP and then transferred to the acceptor end of tRNA(Asp/Asn). This Rhodococcus jostii (strain RHA1) protein is Aspartate--tRNA(Asp/Asn) ligase.